A 264-amino-acid polypeptide reads, in one-letter code: Thymidylate synthase (264 aa).

DUMP is bound at residue arginine 21. (6R)-5,10-methylene-5,6,7,8-tetrahydrofolate is bound at residue histidine 51. Position 126 to 127 (126 to 127 (RR)) interacts with dUMP. Cysteine 146 acts as the Nucleophile in catalysis. DUMP contacts are provided by residues 166-169 (RSAD), asparagine 177, and 207-209 (HIY). A (6R)-5,10-methylene-5,6,7,8-tetrahydrofolate-binding site is contributed by aspartate 169. A (6R)-5,10-methylene-5,6,7,8-tetrahydrofolate-binding site is contributed by alanine 263.

This sequence belongs to the thymidylate synthase family. Bacterial-type ThyA subfamily. Homodimer.

It is found in the cytoplasm. The enzyme catalyses dUMP + (6R)-5,10-methylene-5,6,7,8-tetrahydrofolate = 7,8-dihydrofolate + dTMP. It functions in the pathway pyrimidine metabolism; dTTP biosynthesis. Catalyzes the reductive methylation of 2'-deoxyuridine-5'-monophosphate (dUMP) to 2'-deoxythymidine-5'-monophosphate (dTMP) while utilizing 5,10-methylenetetrahydrofolate (mTHF) as the methyl donor and reductant in the reaction, yielding dihydrofolate (DHF) as a by-product. This enzymatic reaction provides an intracellular de novo source of dTMP, an essential precursor for DNA biosynthesis. The polypeptide is Thymidylate synthase (Cupriavidus metallidurans (strain ATCC 43123 / DSM 2839 / NBRC 102507 / CH34) (Ralstonia metallidurans)).